The chain runs to 309 residues: Ornithine carbamoyltransferase (309 aa).

Residues 56–59 (STRT), glutamine 83, arginine 107, and 134–137 (HPCQ) each bind carbamoyl phosphate. L-ornithine is bound by residues asparagine 165, aspartate 223, and 227-228 (SM). Carbamoyl phosphate-binding positions include 263 to 264 (CL) and arginine 291.

Belongs to the aspartate/ornithine carbamoyltransferase superfamily. OTCase family.

It is found in the cytoplasm. It carries out the reaction carbamoyl phosphate + L-ornithine = L-citrulline + phosphate + H(+). Its pathway is amino-acid biosynthesis; L-arginine biosynthesis; L-arginine from L-ornithine and carbamoyl phosphate: step 1/3. Its function is as follows. Reversibly catalyzes the transfer of the carbamoyl group from carbamoyl phosphate (CP) to the N(epsilon) atom of ornithine (ORN) to produce L-citrulline. The polypeptide is Ornithine carbamoyltransferase (Burkholderia mallei (strain ATCC 23344)).